Consider the following 491-residue polypeptide: Xaa-Pro aminopeptidase 1 (491 aa).

The disordered stretch occupies residues 1–32; that stretch reads MAEELTPENPAIPETPEETEEPIKQRKNGLYP. 5 residues coordinate Mn(2+): aspartate 308, aspartate 320, histidine 403, glutamate 434, and glutamate 458.

This sequence belongs to the peptidase M24B family. As to quaternary structure, homodimer. Mn(2+) is required as a cofactor.

It catalyses the reaction Release of any N-terminal amino acid, including proline, that is linked to proline, even from a dipeptide or tripeptide.. The polypeptide is Xaa-Pro aminopeptidase 1 (pepPI) (Streptomyces coelicolor (strain ATCC BAA-471 / A3(2) / M145)).